The sequence spans 142 residues: UPF0102 protein Bamb_0202 (142 aa).

Residues 1–23 (MCHAAPAAPASGRGLPHGGGNFS) are disordered.

This sequence belongs to the UPF0102 family.

The polypeptide is UPF0102 protein Bamb_0202 (Burkholderia ambifaria (strain ATCC BAA-244 / DSM 16087 / CCUG 44356 / LMG 19182 / AMMD) (Burkholderia cepacia (strain AMMD))).